Here is a 173-residue protein sequence, read N- to C-terminus: Shikimate kinase 2 (173 aa).

12-17 (GCGKTT) is an ATP binding site. Residues Thr16 and Asp32 each contribute to the Mg(2+) site. The substrate site is built by Asp34, Arg58, and Gly79. The tract at residues 112–126 (EENPQDNQRPTLTGR) is LID domain. Residue Arg120 coordinates ATP. Substrate is bound at residue Arg139. Gln155 is an ATP binding site.

This sequence belongs to the shikimate kinase family. AroL subfamily. In terms of assembly, monomer. Mg(2+) is required as a cofactor.

It is found in the cytoplasm. It carries out the reaction shikimate + ATP = 3-phosphoshikimate + ADP + H(+). It participates in metabolic intermediate biosynthesis; chorismate biosynthesis; chorismate from D-erythrose 4-phosphate and phosphoenolpyruvate: step 5/7. In terms of biological role, catalyzes the specific phosphorylation of the 3-hydroxyl group of shikimic acid using ATP as a cosubstrate. The polypeptide is Shikimate kinase 2 (Pectobacterium carotovorum subsp. carotovorum (strain PC1)).